The primary structure comprises 185 residues: Large ribosomal subunit protein uL22 (185 aa).

This sequence belongs to the universal ribosomal protein uL22 family. In terms of assembly, part of the 50S ribosomal subunit.

Functionally, this protein binds specifically to 23S rRNA. It makes multiple contacts with different domains of the 23S rRNA in the assembled 50S subunit and ribosome. The globular domain of the protein is located near the polypeptide exit tunnel on the outside of the subunit, while an extended beta-hairpin is found that lines the wall of the exit tunnel in the center of the 70S ribosome. This chain is Large ribosomal subunit protein uL22, found in Caldivirga maquilingensis (strain ATCC 700844 / DSM 13496 / JCM 10307 / IC-167).